Here is a 1026-residue protein sequence, read N- to C-terminus: Multidrug resistance protein MdtC (1026 aa).

The next 12 membrane-spanning stretches (helical) occupy residues 12 to 32, 333 to 353, 360 to 380, 387 to 407, 431 to 451, 463 to 483, 528 to 548, 853 to 873, 875 to 895, 897 to 917, 953 to 973, and 984 to 1004; these read VATL…FRLL, EVEQ…FLFL, AIPA…MYLC, LSLM…IVVL, VGFT…PLLL, FAVT…TLTP, WVLL…ISIP, LLLI…LYES, VHPL…LLAL, WFGA…IGIV, PIMM…LTSG, and ITIV…TPVV.

It belongs to the resistance-nodulation-cell division (RND) (TC 2.A.6) family. MdtC subfamily. In terms of assembly, part of a tripartite efflux system composed of MdtA, MdtB and MdtC. MdtC forms a heteromultimer with MdtB.

The protein localises to the cell inner membrane. In Pectobacterium carotovorum subsp. carotovorum (strain PC1), this protein is Multidrug resistance protein MdtC.